Here is a 604-residue protein sequence, read N- to C-terminus: Protein CBFA2T2 (604 aa).

The tract at residues 25–105 (KRVPAMPGSP…SSTSSALTNQ (81 aa)) is disordered. A Phosphoserine modification is found at S33. K38 participates in a covalent cross-link: Glycyl lysine isopeptide (Lys-Gly) (interchain with G-Cter in SUMO2). Over residues 46-59 (PTMPPLPPINPGGP) the composition is skewed to pro residues. Polar residues-rich tracts occupy residues 64 to 79 (FTPT…SPPT) and 88 to 105 (QRFS…LTNQ). The interval 107 to 215 (LPATCGARQL…QHEHLLLNTS (109 aa)) is interaction with PRDM14. The TAFH domain occupies 113-208 (ARQLSKLKRF…TPSQYLAQHE (96 aa)). The interval 229-265 (VHGNGKRPSPERREENSFDRDTIAPEPPAKRVCTISP) is disordered. The segment covering 236 to 251 (PSPERREENSFDRDTI) has biased composition (basic and acidic residues). S264 carries the phosphoserine modification. Residues 331–377 (QDELVDHRLTEREWADEWKHLDHALNCIMEMVEKTRRSMAVLRRCQE) are nervy homology region 2 (NHR2). The segment at 397-427 (RKTGTELVSRQHSPGSADSLSNDSQREFNSR) is disordered. Residues 402–419 (ELVSRQHSPGSADSLSND) show a composition bias toward polar residues. S409 is modified (phosphoserine). Residues 435-484 (VEFWKKTEEAVNKVKIQAMSEVQKAVAEAEQKAFEVIATERARMEQTIAD) form a nervy homology region 3 (NHR3) region. K449 participates in a covalent cross-link: Glycyl lysine isopeptide (Lys-Gly) (interchain with G-Cter in SUMO2). Residues 451–491 (QAMSEVQKAVAEAEQKAFEVIATERARMEQTIADVKRQAAE) adopt a coiled-coil conformation. Zn(2+)-binding residues include C507, C510, C518, C521, C527, C531, H539, and C543. The MYND-type zinc finger occupies 507 to 543 (CWNCGRKASETCSGCNIARYCGSFCQHKDWERHHRLC). Positions 547–604 (LHGQSPHGQGRPLLPVGRGSSARSADCSVPSPALDKTSATTSRSSTPASVTAIDTNGL) are disordered. At S577 the chain carries Phosphoserine. A compositionally biased stretch (low complexity) spans 583 to 598 (TSATTSRSSTPASVTA).

It belongs to the CBFA2T family. As to quaternary structure, homooligomer. Homotetramerization is mediated by nervy homology region 2. Can interact with RUNX1T1/CBFA2T1 and CBFA2T3/MTG16; heterotetramerization between members of the CBFA2T family is proposed. Forms a heterooligomer with the AML1-MTG8/ETO fusion protein. Interacts with PRDM14. Interacts with RBPJ, GFI1, TCF4. Interacts with TAL1 and CBFA2T3/MTG16; the heteromer with CBFA2T3/MTG16 may function in repression of TAL1. In terms of tissue distribution, ubiquitously expressed in fetal and adult tissues. Highly expressed in adult brain, heart, lung, kidney, lymph node, appendix, thymus, testis, uterus, small intestine, prostate and thymus.

Its subcellular location is the nucleus. In terms of biological role, transcriptional corepressor which facilitates transcriptional repression via its association with DNA-binding transcription factors and recruitment of other corepressors and histone-modifying enzymes. Via association with PRDM14 is involved in regulation of embryonic stem cell (ESC) pluripotency. Involved in primordial germ cell (PCG) formation. Stabilizes PRDM14 and OCT4 on chromatin in a homooligomerization-dependent manner. Can repress the expression of MMP7 in a ZBTB33-dependent manner. May function as a complex with the chimeric protein RUNX1/AML1-CBFA2T1/MTG8 (AML1-MTG8/ETO fusion protein) which is produced in acute myeloid leukemia with the chromosomal translocation t(8;21). May thus be involved in the repression of AML1-dependent transcription and the induction of G-CSF/CSF3-dependent cell growth. May be a tumor suppressor gene candidate involved in myeloid tumors with the deletion of the 20q11 region. Through heteromerization with CBFA2T3/MTG16 may be involved in regulation of the proliferation and the differentiation of erythroid progenitors by repressing the expression of TAL1 target genes. Required for the maintenance of the secretory cell lineage in the small intestine. Can inhibit Notch signaling probably by association with RBPJ and may be involved in GFI1-mediated Paneth cell differentiation. This Homo sapiens (Human) protein is Protein CBFA2T2 (CBFA2T2).